The sequence spans 262 residues: Acyl-[acyl-carrier-protein]--UDP-N-acetylglucosamine O-acyltransferase (262 aa).

It belongs to the transferase hexapeptide repeat family. LpxA subfamily. In terms of assembly, homotrimer.

It is found in the cytoplasm. It catalyses the reaction a (3R)-hydroxyacyl-[ACP] + UDP-N-acetyl-alpha-D-glucosamine = a UDP-3-O-[(3R)-3-hydroxyacyl]-N-acetyl-alpha-D-glucosamine + holo-[ACP]. It functions in the pathway glycolipid biosynthesis; lipid IV(A) biosynthesis; lipid IV(A) from (3R)-3-hydroxytetradecanoyl-[acyl-carrier-protein] and UDP-N-acetyl-alpha-D-glucosamine: step 1/6. Its function is as follows. Involved in the biosynthesis of lipid A, a phosphorylated glycolipid that anchors the lipopolysaccharide to the outer membrane of the cell. The chain is Acyl-[acyl-carrier-protein]--UDP-N-acetylglucosamine O-acyltransferase from Salmonella arizonae (strain ATCC BAA-731 / CDC346-86 / RSK2980).